The sequence spans 110 residues: Large ribosomal subunit protein uL22 (110 aa).

Belongs to the universal ribosomal protein uL22 family. As to quaternary structure, part of the 50S ribosomal subunit.

Its function is as follows. This protein binds specifically to 23S rRNA; its binding is stimulated by other ribosomal proteins, e.g. L4, L17, and L20. It is important during the early stages of 50S assembly. It makes multiple contacts with different domains of the 23S rRNA in the assembled 50S subunit and ribosome. The globular domain of the protein is located near the polypeptide exit tunnel on the outside of the subunit, while an extended beta-hairpin is found that lines the wall of the exit tunnel in the center of the 70S ribosome. This is Large ribosomal subunit protein uL22 from Aggregatibacter actinomycetemcomitans (Actinobacillus actinomycetemcomitans).